Reading from the N-terminus, the 507-residue chain is ATP synthase subunit alpha, chloroplastic (507 aa).

170 to 177 (GDRQTGKT) serves as a coordination point for ATP.

This sequence belongs to the ATPase alpha/beta chains family. F-type ATPases have 2 components, CF(1) - the catalytic core - and CF(0) - the membrane proton channel. CF(1) has five subunits: alpha(3), beta(3), gamma(1), delta(1), epsilon(1). CF(0) has four main subunits: a, b, b' and c.

Its subcellular location is the plastid. It localises to the chloroplast thylakoid membrane. It catalyses the reaction ATP + H2O + 4 H(+)(in) = ADP + phosphate + 5 H(+)(out). Functionally, produces ATP from ADP in the presence of a proton gradient across the membrane. The alpha chain is a regulatory subunit. The chain is ATP synthase subunit alpha, chloroplastic from Phalaenopsis aphrodite subsp. formosana (Moth orchid).